The sequence spans 1175 residues: Double-stranded RNA-specific adenosine deaminase (1175 aa).

2 positions are modified to asymmetric dimethylarginine: R30 and R42. Positions 135–201 (LSISQNPEQK…GKPPLWSLVP (67 aa)) constitute a Z-binding 1 domain. The segment at 135–204 (LSISQNPEQK…PLWSLVPLSQ (70 aa)) is interaction with Z-DNA. The tract at residues 207-239 (TQPPRAVNSDKEVPRGEPDLDSEDGDPASDLEG) is disordered. Over residues 214 to 224 (NSDKEVPRGEP) the composition is skewed to basic and acidic residues. Positions 225–235 (DLDSEDGDPAS) are enriched in acidic residues. 2 positions are modified to phosphoserine: S228 and S235. The 65-residue stretch at 243–307 (LLDMAEIKEK…ATPPIWYLTD (65 aa)) folds into the Z-binding 2 domain. The segment at 315-384 (MKRSTHSGPA…ARPGPVRLRP (70 aa)) is disordered. Basic and acidic residues predominate over residues 357 to 376 (KRVENGQEPVTKYESRHEAR). A Glycyl lysine isopeptide (Lys-Gly) (interchain with G-Cter in SUMO); alternate cross-link involves residue K368. Residue K368 forms a Glycyl lysine isopeptide (Lys-Gly) (interchain with G-Cter in SUMO1); alternate linkage. A Glycyl lysine isopeptide (Lys-Gly) (interchain with G-Cter in SUMO2); alternate cross-link involves residue K368. Phosphoserine is present on S431. Residues 453–521 (NPVSGLLEYA…AVKAMAILLR (69 aa)) enclose the DRBM 1 domain. Residues 524–561 (KAKDSGQPEELSNCPMEEDPEKPAESQPPSSSATSLFS) are disordered. The segment covering 550 to 561 (QPPSSSATSLFS) has biased composition (polar residues). Residues S564, S579, and S586 each carry the phosphoserine modification. The 69-residue stretch at 564–632 (SPVTTLLECM…AEEAMKALQE (69 aa)) folds into the DRBM 2 domain. Positions 632-652 (EEAANSADDQSGGANTDSLDE) are disordered. The span at 638 to 648 (ADDQSGGANTD) shows a compositional bias: polar residues. The segment at 662-671 (IGELVRYLNT) is N-terminal extension of DRBM 3 and constituent of a bi-partite nuclear localization signal. In terms of domain architecture, DRBM 3 spans 672–740 (NPVGGLLEYA…ADAALRVLIG (69 aa)). The C-terminal extension of DRBM 3 and constituent of a bi-partite nuclear localization signal stretch occupies residues 741-747 (ESEKAEQ). Phosphothreonine is present on T754. Phosphoserine is present on residues S760, S769, and S771. A Glycyl lysine isopeptide (Lys-Gly) (interchain with G-Cter in SUMO2) cross-link involves residue K821. The 336-residue stretch at 832 to 1167 (SLGTGNRCVK…ISKPQEEKNF (336 aa)) folds into the A to I editase domain. H856 serves as a coordination point for Zn(2+). The active-site Proton donor is E858. The Zn(2+) site is built by C912 and C982.

Homodimer. Homodimerization is essential for its catalytic activity. Isoform 5 can form heterodimers with ADARB1/ADAR2. Isoform 1 interacts with ILF2/NF45 and ILF3/NF90. Binding to ILF3/NF90 up-regulates ILF3-mediated gene expression. Isoform 1 and isoform 5 (via DRBM 3 domain) interact with TNPO1. Isoform 5 (via DRBM domains) interacts with XPO5. Isoform 1 and isoform 5 can interact with EIF2AK2/PKR and UPF1. Post-translationally, sumoylation reduces RNA-editing activity. In terms of tissue distribution, detected in brain.

Its subcellular location is the cytoplasm. The protein localises to the nucleus. It carries out the reaction adenosine in double-stranded RNA + H2O + H(+) = inosine in double-stranded RNA + NH4(+). Its function is as follows. Catalyzes the hydrolytic deamination of adenosine to inosine in double-stranded RNA (dsRNA) referred to as A-to-I RNA editing. This may affect gene expression and function in a number of ways that include mRNA translation by changing codons and hence the amino acid sequence of proteins; pre-mRNA splicing by altering splice site recognition sequences; RNA stability by changing sequences involved in nuclease recognition; genetic stability in the case of RNA virus genomes by changing sequences during viral RNA replication; and RNA structure-dependent activities such as microRNA production or targeting or protein-RNA interactions. Can edit both viral and cellular RNAs and can edit RNAs at multiple sites (hyper-editing) or at specific sites (site-specific editing). Its cellular RNA substrates include: bladder cancer-associated protein (BLCAP), neurotransmitter receptors for glutamate (GRIA2) and serotonin (HTR2C) and GABA receptor (GABRA3). Site-specific RNA editing of transcripts encoding these proteins results in amino acid substitutions which consequently alters their functional activities. Exhibits low-level editing at the GRIA2 Q/R site, but edits efficiently at the R/G site and HOTSPOT1. Does not affect polyomavirus replication but provides protection against virus-induced cytopathic effects. Essential for embryonic development and cell survival and plays a critical role in the maintenance of hematopoietic stem cells. The chain is Double-stranded RNA-specific adenosine deaminase (Adar) from Rattus norvegicus (Rat).